Here is a 188-residue protein sequence, read N- to C-terminus: uncharacterized protein (188 aa).

The disordered stretch occupies residues 133–153 (PKGRPTMKLQYPKMPPKPKTR).

The protein belongs to the IS150/IS1296 orfA family.

This is an uncharacterized protein from Haemophilus influenzae (strain ATCC 51907 / DSM 11121 / KW20 / Rd).